The chain runs to 304 residues: MSWIERIKSNITPTRKASIPEGVWTKCDSCGQVLYRAELERNLEVCPKCDHHMRMTARNRLHSLLDEGSLVELGSELEPKDVLKFRDSKKYKDRLASAQKETGEKDALVVMKGTLYGMPVVAAAFEFAFMGGSMGSVVGARFVRAVEQALEDNCPLICFSASGGARMQEALMSLMQMAKTSAALAKMQERGLPYISVLTDPTMGGVSASFAMLGDLNIAEPKALIGFAGPRVIEQTVREKLPPGFQRSEFLIEKGAIDMIVHRPEMRLKLASILAKLMNLPAPNPEAPREGVVVPPVPDQEPEA.

The 270-residue stretch at 23–292 folds into the CoA carboxyltransferase N-terminal domain; sequence VWTKCDSCGQ…PNPEAPREGV (270 aa). Zn(2+) is bound by residues Cys-27, Cys-30, Cys-46, and Cys-49. The segment at 27–49 adopts a C4-type zinc-finger fold; the sequence is CDSCGQVLYRAELERNLEVCPKC. Residues 285–304 are disordered; the sequence is PEAPREGVVVPPVPDQEPEA. Pro residues predominate over residues 295–304; sequence PPVPDQEPEA.

The protein belongs to the AccD/PCCB family. In terms of assembly, acetyl-CoA carboxylase is a heterohexamer composed of biotin carboxyl carrier protein (AccB), biotin carboxylase (AccC) and two subunits each of ACCase subunit alpha (AccA) and ACCase subunit beta (AccD). Requires Zn(2+) as cofactor.

The protein resides in the cytoplasm. The enzyme catalyses N(6)-carboxybiotinyl-L-lysyl-[protein] + acetyl-CoA = N(6)-biotinyl-L-lysyl-[protein] + malonyl-CoA. The protein operates within lipid metabolism; malonyl-CoA biosynthesis; malonyl-CoA from acetyl-CoA: step 1/1. Functionally, component of the acetyl coenzyme A carboxylase (ACC) complex. Biotin carboxylase (BC) catalyzes the carboxylation of biotin on its carrier protein (BCCP) and then the CO(2) group is transferred by the transcarboxylase to acetyl-CoA to form malonyl-CoA. In Shigella sonnei (strain Ss046), this protein is Acetyl-coenzyme A carboxylase carboxyl transferase subunit beta.